A 232-amino-acid chain; its full sequence is Adenosylcobinamide-GDP ribazoletransferase (232 aa).

7 helical membrane-spanning segments follow: residues 24 to 44 (LWAF…ILYL), 46 to 66 (IPLA…LLHL), 96 to 116 (IAGV…LSML), 117 to 137 (PFYA…LGLA), 153 to 173 (GMNG…YLPV), 174 to 194 (VIYD…WYVI), and 210 to 230 (GAMA…SLCF).

Belongs to the CobS family. The cofactor is Mg(2+).

Its subcellular location is the cell membrane. It carries out the reaction alpha-ribazole + adenosylcob(III)inamide-GDP = adenosylcob(III)alamin + GMP + H(+). The enzyme catalyses alpha-ribazole 5'-phosphate + adenosylcob(III)inamide-GDP = adenosylcob(III)alamin 5'-phosphate + GMP + H(+). Its pathway is cofactor biosynthesis; adenosylcobalamin biosynthesis; adenosylcobalamin from cob(II)yrinate a,c-diamide: step 7/7. Functionally, joins adenosylcobinamide-GDP and alpha-ribazole to generate adenosylcobalamin (Ado-cobalamin). Also synthesizes adenosylcobalamin 5'-phosphate from adenosylcobinamide-GDP and alpha-ribazole 5'-phosphate. This chain is Adenosylcobinamide-GDP ribazoletransferase, found in Pyrococcus abyssi (strain GE5 / Orsay).